Reading from the N-terminus, the 314-residue chain is Oxidoreductase NAD-binding domain-containing protein 1 (314 aa).

Residues 1–18 (MALVAGSAAYQVLRGVTG) form the signal peptide. Residues 63–166 (EIISPAKVCE…VGGEFCFDPQ (104 aa)) enclose the FAD-binding FR-type domain. 180-185 (GVGINP) is a binding site for NAD(+).

The sequence is that of Oxidoreductase NAD-binding domain-containing protein 1 (oxnad1) from Xenopus tropicalis (Western clawed frog).